The chain runs to 312 residues: tRNA dimethylallyltransferase (312 aa).

Residue 13–20 (GPTAVGKT) participates in ATP binding. 15-20 (TAVGKT) serves as a coordination point for substrate. Interaction with substrate tRNA stretches follow at residues 38 to 41 (DSVQ) and 163 to 167 (QRVVR).

This sequence belongs to the IPP transferase family. As to quaternary structure, monomer. Requires Mg(2+) as cofactor.

It catalyses the reaction adenosine(37) in tRNA + dimethylallyl diphosphate = N(6)-dimethylallyladenosine(37) in tRNA + diphosphate. In terms of biological role, catalyzes the transfer of a dimethylallyl group onto the adenine at position 37 in tRNAs that read codons beginning with uridine, leading to the formation of N6-(dimethylallyl)adenosine (i(6)A). The protein is tRNA dimethylallyltransferase of Exiguobacterium sibiricum (strain DSM 17290 / CCUG 55495 / CIP 109462 / JCM 13490 / 255-15).